The following is a 370-amino-acid chain: MSMNSYGHLFRVTTWGESHGPALGATVDGCPPGIDVDAAAIQHWLDRRKPGQNKYTTQRREADEVEILSGVYEGQSTGTPIQLMIRNTDQRSKDYGDIAEKFRPGHADITYWQKYGIRDPRGGGRSSARETAARVAAGGVARLALAALVPAVKITGYMVQMGPHGIDRECFDLAQVDENPFWVPDAKAADEWAAYLDGLRKSGDSVGAVIEVRASGLPAGLGAPIYGKLDTDLAAAMMSINAVKGVEIGDGMAAAALTGSANADEIHMGDNGPEYSSNHAGGILGGISTGQDVIVRFAVKPTSSILTPRATITKAGTPAEIITKGRHDPCVGIRAVPVGEAMMACVVLDHILLQRGQIGGKVGETRGKIG.

Arg48 is a binding site for NADP(+). FMN contacts are provided by residues 125 to 127 (RSS), 241 to 242 (NA), Gly285, 300 to 304 (KPTSS), and Arg326.

Belongs to the chorismate synthase family. Homotetramer. The cofactor is FMNH2.

The catalysed reaction is 5-O-(1-carboxyvinyl)-3-phosphoshikimate = chorismate + phosphate. It participates in metabolic intermediate biosynthesis; chorismate biosynthesis; chorismate from D-erythrose 4-phosphate and phosphoenolpyruvate: step 7/7. Catalyzes the anti-1,4-elimination of the C-3 phosphate and the C-6 proR hydrogen from 5-enolpyruvylshikimate-3-phosphate (EPSP) to yield chorismate, which is the branch point compound that serves as the starting substrate for the three terminal pathways of aromatic amino acid biosynthesis. This reaction introduces a second double bond into the aromatic ring system. The protein is Chorismate synthase of Jannaschia sp. (strain CCS1).